Reading from the N-terminus, the 895-residue chain is Receptor-like protein kinase FERONIA (895 aa).

Residues Met-1–Ala-27 form the signal peptide. Over Ala-28–Ala-447 the chain is Extracellular. Asn-46, Asn-124, Asn-142, Asn-171, Asn-219, Asn-269, Asn-305, Asn-330, Asn-345, and Asn-410 each carry an N-linked (GlcNAc...) asparagine glycan. A helical membrane pass occupies residues Ile-448 to Phe-468. Residues Gly-469–Arg-895 lie on the Cytoplasmic side of the membrane. The 275-residue stretch at Phe-536–Ala-810 folds into the Protein kinase domain. ATP-binding positions include Leu-542–Val-550 and Lys-565. The Proton acceptor role is filled by Asp-661. The interval Asn-844–Arg-895 is disordered. Phosphoserine is present on residues Ser-858, Ser-866, Ser-871, and Ser-874. Over residues Ala-884–Arg-895 the composition is skewed to polar residues.

Belongs to the protein kinase superfamily. Ser/Thr protein kinase family. Interacts with ROPGEF1. Interacts with RALF1; triggering phosphorylation status and subsequent activation. Interacts with LRE and LLG1. Interacts, via its extracellular domain, with FERONIA at the synergid cell surface. Autophosphorylated. In terms of processing, phosphorylated at Ser-858, Ser-871 and Ser-874 upon activation by RALF1. In terms of tissue distribution, expressed in leaves, buds, flowers, siliques, young ovules primordia, and young anthers with immature pollen, but not detected in mature pollen. Highest expression in the synergid cells of the female gametophyte.

It localises to the cell membrane. The catalysed reaction is L-seryl-[protein] + ATP = O-phospho-L-seryl-[protein] + ADP + H(+). It catalyses the reaction L-threonyl-[protein] + ATP = O-phospho-L-threonyl-[protein] + ADP + H(+). Receptor-like protein kinase that mediates the female control of male gamete delivery during fertilization, including growth cessation of compatible pollen tubes ensuring a reproductive isolation barriers, by regulating MLO7 subcellular polarization upon pollen tube perception in the female gametophyte synergids. Required for cell elongation during vegetative growth, mostly in a brassinosteroids- (BR-) independent manner. Acts as an upstream regulator for the Rac/Rop-signaling pathway that controls ROS-mediated root hair development. Seems to regulate a cross-talk between brassinosteroids and ethylene signaling pathways during hypocotyl elongation. Negative regulator of brassinosteroid response in light-grown hypocotyls, but required for brassinosteroid response in etiolated seedlings. Mediates sensitivity to powdery mildew (e.g. Golovinomyces orontii). Positive regulator of auxin-promoted growth that represses the abscisic acid (ABA) signaling via the activation of ABI2 phosphatase. Required for RALF1-mediated extracellular alkalinization in a signaling pathway preventing cell expansion. The chain is Receptor-like protein kinase FERONIA from Arabidopsis thaliana (Mouse-ear cress).